The following is a 144-amino-acid chain: Large ribosomal subunit protein uL15 (144 aa).

The interval 1–57 (MKLNDLSPAPGSRREKHRPGRGIGSGLGKTGGRGHKGQTSRSGGSIAPGFEGGQQPL) is disordered. Residues 21–31 (RGIGSGLGKTG) are compositionally biased toward gly residues.

The protein belongs to the universal ribosomal protein uL15 family. Part of the 50S ribosomal subunit.

Binds to the 23S rRNA. In Pseudomonas putida (strain ATCC 700007 / DSM 6899 / JCM 31910 / BCRC 17059 / LMG 24140 / F1), this protein is Large ribosomal subunit protein uL15.